Here is a 264-residue protein sequence, read N- to C-terminus: Hydroxyethylthiazole kinase (264 aa).

Substrate is bound at residue Met-52. ATP is bound by residues Arg-127 and Thr-173. Gly-200 contributes to the substrate binding site.

Belongs to the Thz kinase family. Requires Mg(2+) as cofactor.

It carries out the reaction 5-(2-hydroxyethyl)-4-methylthiazole + ATP = 4-methyl-5-(2-phosphooxyethyl)-thiazole + ADP + H(+). It participates in cofactor biosynthesis; thiamine diphosphate biosynthesis; 4-methyl-5-(2-phosphoethyl)-thiazole from 5-(2-hydroxyethyl)-4-methylthiazole: step 1/1. Its function is as follows. Catalyzes the phosphorylation of the hydroxyl group of 4-methyl-5-beta-hydroxyethylthiazole (THZ). The sequence is that of Hydroxyethylthiazole kinase from Pectobacterium carotovorum subsp. carotovorum (strain PC1).